Reading from the N-terminus, the 83-residue chain is Hainantoxin-III 11 (83 aa).

A signal peptide spans 1 to 21 (MKASMFLALAGLVLLFVVGYA). Positions 22–48 (SESEEKDFPRELLSKIFAVDDFKGEER) are excised as a propeptide. Intrachain disulfides connect C50-C65, C57-C70, and C64-C77. Leucine amide is present on L81.

Belongs to the neurotoxin 10 (Hwtx-1) family. 15 (Hntx-3) subfamily. As to quaternary structure, monomer. Expressed by the venom gland.

The protein localises to the secreted. Functionally, selective antagonist of neuronal tetrodotoxin (TTX)-sensitive voltage-gated sodium channels (IC(50)=1270 nM on Nav1.1/SCN1A, 270 nM on Nav1.2/SCN2A, 491 nM on Nav1.3/SCN3A and 232 nM on Nav1.7/SCN9A). This toxin suppress Nav1.7 current amplitude without significantly altering the activation, inactivation, and repriming kinetics. Short extreme depolarizations partially activate the toxin-bound channel, indicating voltage-dependent inhibition of this toxin. This toxin increases the deactivation of the Nav1.7 current after extreme depolarizations. The toxin-Nav1.7 complex is gradually dissociated upon prolonged strong depolarizations in a voltage-dependent manner, and the unbound toxin rebinds to Nav1.7 after a long repolarization. Moreover, analysis of chimeric channels showed that the DIIS3-S4 linker is critical for toxin binding to Nav1.7. These data are consistent with this toxin interacting with Nav1.7 site 4 and trapping the domain II voltage sensor in the closed state. The polypeptide is Hainantoxin-III 11 (Cyriopagopus hainanus (Chinese bird spider)).